The following is a 338-amino-acid chain: Phenylalanine--tRNA ligase alpha subunit (338 aa).

Residue Glu253 participates in Mg(2+) binding.

This sequence belongs to the class-II aminoacyl-tRNA synthetase family. Phe-tRNA synthetase alpha subunit type 1 subfamily. As to quaternary structure, tetramer of two alpha and two beta subunits. Mg(2+) serves as cofactor.

It localises to the cytoplasm. The enzyme catalyses tRNA(Phe) + L-phenylalanine + ATP = L-phenylalanyl-tRNA(Phe) + AMP + diphosphate + H(+). The sequence is that of Phenylalanine--tRNA ligase alpha subunit from Citrifermentans bemidjiense (strain ATCC BAA-1014 / DSM 16622 / JCM 12645 / Bem) (Geobacter bemidjiensis).